Reading from the N-terminus, the 334-residue chain is Probable GTP 3',8-cyclase (334 aa).

In terms of domain architecture, Radical SAM core spans 24 to 256 (PYGRKVTGLR…RKKYMIDGVE (233 aa)). A GTP-binding site is contributed by R33. [4Fe-4S] cluster-binding residues include C40 and C44. Y46 contributes to the S-adenosyl-L-methionine binding site. A [4Fe-4S] cluster-binding site is contributed by C47. K85 serves as a coordination point for GTP. S-adenosyl-L-methionine is bound at residue G89. Residue T113 coordinates GTP. S137 is an S-adenosyl-L-methionine binding site. Position 176 (K176) interacts with GTP. [4Fe-4S] cluster contacts are provided by C269 and C272. 274 to 276 (RLR) lines the GTP pocket. C286 serves as a coordination point for [4Fe-4S] cluster.

It belongs to the radical SAM superfamily. MoaA family. Requires [4Fe-4S] cluster as cofactor.

The catalysed reaction is GTP + AH2 + S-adenosyl-L-methionine = (8S)-3',8-cyclo-7,8-dihydroguanosine 5'-triphosphate + 5'-deoxyadenosine + L-methionine + A + H(+). The protein operates within cofactor biosynthesis; molybdopterin biosynthesis. Functionally, catalyzes the cyclization of GTP to (8S)-3',8-cyclo-7,8-dihydroguanosine 5'-triphosphate. The protein is Probable GTP 3',8-cyclase of Methanosarcina mazei (strain ATCC BAA-159 / DSM 3647 / Goe1 / Go1 / JCM 11833 / OCM 88) (Methanosarcina frisia).